We begin with the raw amino-acid sequence, 391 residues long: Elongation factor Tu 2 (391 aa).

Residues 10-201 (KPHVNIGTIG…EVDRYIPTPE (192 aa)) form the tr-type G domain. The segment at 19–26 (GHVDHGKT) is G1. 19–26 (GHVDHGKT) contributes to the GTP binding site. Residue Thr26 participates in Mg(2+) binding. The interval 55 to 59 (GITIS) is G2. The segment at 76–79 (DCPG) is G3. GTP-binding positions include 76-80 (DCPGH) and 131-134 (NKVD). Residues 131–134 (NKVD) form a G4 region. Residues 169 to 171 (SAL) form a G5 region.

Belongs to the TRAFAC class translation factor GTPase superfamily. Classic translation factor GTPase family. EF-Tu/EF-1A subfamily. Monomer.

Its subcellular location is the cytoplasm. The enzyme catalyses GTP + H2O = GDP + phosphate + H(+). Functionally, GTP hydrolase that promotes the GTP-dependent binding of aminoacyl-tRNA to the A-site of ribosomes during protein biosynthesis. This is Elongation factor Tu 2 from Bartonella bacilliformis (strain ATCC 35685 / KC583 / Herrer 020/F12,63).